Consider the following 78-residue polypeptide: ATP synthase subunit c (78 aa).

2 helical membrane passes run 12-32 and 54-74; these read IGAG…GHVV and FIGI…ALLL.

The protein belongs to the ATPase C chain family. In terms of assembly, F-type ATPases have 2 components, F(1) - the catalytic core - and F(0) - the membrane proton channel. F(1) has five subunits: alpha(3), beta(3), gamma(1), delta(1), epsilon(1). F(0) has four main subunits: a(1), b(1), b'(1) and c(10-14). The alpha and beta chains form an alternating ring which encloses part of the gamma chain. F(1) is attached to F(0) by a central stalk formed by the gamma and epsilon chains, while a peripheral stalk is formed by the delta, b and b' chains.

It is found in the cellular chromatophore membrane. Its function is as follows. F(1)F(0) ATP synthase produces ATP from ADP in the presence of a proton or sodium gradient. F-type ATPases consist of two structural domains, F(1) containing the extramembraneous catalytic core and F(0) containing the membrane proton channel, linked together by a central stalk and a peripheral stalk. During catalysis, ATP synthesis in the catalytic domain of F(1) is coupled via a rotary mechanism of the central stalk subunits to proton translocation. In terms of biological role, key component of the F(0) channel; it plays a direct role in translocation across the membrane. A homomeric c-ring of between 10-14 subunits forms the central stalk rotor element with the F(1) delta and epsilon subunits. The polypeptide is ATP synthase subunit c (Rhodobacter capsulatus (Rhodopseudomonas capsulata)).